Here is a 79-residue protein sequence, read N- to C-terminus: Small ribosomal subunit protein bS18 (79 aa).

It belongs to the bacterial ribosomal protein bS18 family. As to quaternary structure, part of the 30S ribosomal subunit. Forms a tight heterodimer with protein bS6.

Its function is as follows. Binds as a heterodimer with protein bS6 to the central domain of the 16S rRNA, where it helps stabilize the platform of the 30S subunit. This Bacillus licheniformis (strain ATCC 14580 / DSM 13 / JCM 2505 / CCUG 7422 / NBRC 12200 / NCIMB 9375 / NCTC 10341 / NRRL NRS-1264 / Gibson 46) protein is Small ribosomal subunit protein bS18.